Reading from the N-terminus, the 226-residue chain is ATP synthase subunit a 1 (226 aa).

5 consecutive transmembrane segments (helical) span residues 20–40, 78–98, 113–133, 174–194, and 196–216; these read LTIV…WLIT, YLPF…CTVI, ALAL…SGLV, MILV…MNIL, and LLTG…YIAA.

Belongs to the ATPase A chain family. As to quaternary structure, F-type ATPases have 2 components, CF(1) - the catalytic core - and CF(0) - the membrane proton channel. CF(1) has five subunits: alpha(3), beta(3), gamma(1), delta(1), epsilon(1). CF(0) has four main subunits: a, b, b' and c.

Its subcellular location is the cell inner membrane. Functionally, key component of the proton channel; it plays a direct role in the translocation of protons across the membrane. The protein is ATP synthase subunit a 1 of Chlorobaculum parvum (strain DSM 263 / NCIMB 8327) (Chlorobium vibrioforme subsp. thiosulfatophilum).